The primary structure comprises 338 residues: Glyceraldehyde-3-phosphate dehydrogenase (338 aa).

Residues 12 to 13, aspartate 34, and arginine 79 contribute to the NAD(+) site; that span reads RI. D-glyceraldehyde 3-phosphate-binding positions include 150 to 152, threonine 181, 210 to 211, and arginine 233; these read SCT and TG. Cysteine 151 serves as the catalytic Nucleophile. NAD(+) is bound at residue asparagine 316.

The protein belongs to the glyceraldehyde-3-phosphate dehydrogenase family. Homotetramer.

It is found in the cytoplasm. The enzyme catalyses D-glyceraldehyde 3-phosphate + phosphate + NAD(+) = (2R)-3-phospho-glyceroyl phosphate + NADH + H(+). Its pathway is carbohydrate degradation; glycolysis; pyruvate from D-glyceraldehyde 3-phosphate: step 1/5. The protein is Glyceraldehyde-3-phosphate dehydrogenase (GPD) of Yarrowia lipolytica (strain CLIB 122 / E 150) (Yeast).